The chain runs to 85 residues: Small ribosomal subunit protein bS16c (85 aa).

This sequence belongs to the bacterial ribosomal protein bS16 family.

Its subcellular location is the plastid. It is found in the chloroplast. The polypeptide is Small ribosomal subunit protein bS16c (Oryza nivara (Indian wild rice)).